A 214-amino-acid polypeptide reads, in one-letter code: Ribonuclease HII (214 aa).

The region spanning 18–208 is the RNase H type-2 domain; the sequence is SRVVGVDEVG…SLLPSEAHLC (191 aa). 3 residues coordinate a divalent metal cation: Asp-24, Glu-25, and Asp-116.

Belongs to the RNase HII family. Requires Mn(2+) as cofactor. Mg(2+) serves as cofactor.

It localises to the cytoplasm. It carries out the reaction Endonucleolytic cleavage to 5'-phosphomonoester.. Functionally, endonuclease that specifically degrades the RNA of RNA-DNA hybrids. The chain is Ribonuclease HII from Thermosynechococcus vestitus (strain NIES-2133 / IAM M-273 / BP-1).